The sequence spans 506 residues: Anaerobic nitric oxide reductase transcription regulator NorR (506 aa).

Asp-57 is modified (4-aspartylphosphate). Residues 187–416 form the Sigma-54 factor interaction domain; sequence MIGLSPAMTQ…LEHAIHRAVV (230 aa). Residues 215–222 and 278–287 contribute to the ATP site; these read GETGTGKE and ADNGTLFLDE. A DNA-binding region (H-T-H motif) is located at residues 481-500; sequence WAASARALETDVANLHRLAK.

The protein operates within nitrogen metabolism; nitric oxide reduction. Required for the expression of anaerobic nitric oxide (NO) reductase, acts as a transcriptional activator for at least the norVW operon. Activation also requires sigma-54. The polypeptide is Anaerobic nitric oxide reductase transcription regulator NorR (Salmonella agona (strain SL483)).